A 128-amino-acid polypeptide reads, in one-letter code: Glycine cleavage system H protein (128 aa).

A Lipoyl-binding domain is found at 24 to 106 (LVRIGISEFA…HGEGWLLIIR (83 aa)). An N6-lipoyllysine modification is found at Lys-65.

It belongs to the GcvH family. The glycine cleavage system is composed of four proteins: P, T, L and H. Requires (R)-lipoate as cofactor.

In terms of biological role, the glycine cleavage system catalyzes the degradation of glycine. The H protein shuttles the methylamine group of glycine from the P protein to the T protein. This Prochlorococcus marinus (strain NATL1A) protein is Glycine cleavage system H protein.